The sequence spans 430 residues: Mitochondrial distribution and morphology protein 12 (430 aa).

Residues 1–430 form the SMP-LTD domain; the sequence is MSIDIDWERA…VYPSFWTFLI (430 aa). Disordered stretches follow at residues 61–117, 177–276, and 352–377; these read DLSD…YESN, TPLG…RMRE, and MGPETAGGGGGGDTSEPNSSRRKPSS. Residues 69 to 82 are compositionally biased toward acidic residues; the sequence is FYEDDDENFSDSSE. A compositionally biased stretch (basic and acidic residues) spans 85-96; sequence SPTREPVDRYGN. Composition is skewed to polar residues over residues 211-233 and 241-251; these read SAQSRPSTANTGNTLPSRDSMSI and ASQGMPNNQGQ. Over residues 265 to 276 the composition is skewed to basic and acidic residues; that stretch reads PLDDTPPRRMRE.

It belongs to the MDM12 family. Component of the ER-mitochondria encounter structure (ERMES) or MDM complex, composed of MMM1, MDM10, MDM12 and MDM34. An MMM1 homodimer associates with one molecule of MDM12 on each side in a pairwise head-to-tail manner, and the SMP-LTD domains of MMM1 and MDM12 generate a continuous hydrophobic tunnel for phospholipid trafficking.

It is found in the mitochondrion outer membrane. Its subcellular location is the endoplasmic reticulum membrane. In terms of biological role, component of the ERMES/MDM complex, which serves as a molecular tether to connect the endoplasmic reticulum (ER) and mitochondria. Components of this complex are involved in the control of mitochondrial shape and protein biogenesis, and function in nonvesicular lipid trafficking between the ER and mitochondria. MDM12 is required for the interaction of the ER-resident membrane protein MMM1 and the outer mitochondrial membrane-resident beta-barrel protein MDM10. The MDM12-MMM1 subcomplex functions in the major beta-barrel assembly pathway that is responsible for biogenesis of all mitochondrial outer membrane beta-barrel proteins, and acts in a late step after the SAM complex. The MDM10-MDM12-MMM1 subcomplex further acts in the TOM40-specific pathway after the action of the MDM12-MMM1 complex. Essential for establishing and maintaining the structure of mitochondria and maintenance of mtDNA nucleoids. This chain is Mitochondrial distribution and morphology protein 12, found in Ajellomyces capsulatus (strain G186AR / H82 / ATCC MYA-2454 / RMSCC 2432) (Darling's disease fungus).